Here is a 375-residue protein sequence, read N- to C-terminus: G-protein coupled estrogen receptor 1 (375 aa).

Residue M1 is modified to N-acetylmethionine. Topologically, residues 1–62 (MDVTSQARGV…QQYVIGLFLS (62 aa)) are extracellular. N-linked (GlcNAc...) asparagine glycosylation is found at N25, N32, and N44. The helical transmembrane segment at 63–84 (CLYTIFLFPIGFVGNILILVVN) threads the bilayer. The Cytoplasmic portion of the chain corresponds to 85–96 (ISFREKMTIPDL). A helical membrane pass occupies residues 97-120 (YFINLAVADLILVADSLIEVFNLH). Over 121–132 (ERYYDIAVLCTF) the chain is Extracellular. An intrachain disulfide couples C130 to C207. The chain crosses the membrane as a helical span at residues 133–153 (MSLFLQVNMYSSVFFLTWMSF). Residues 154–175 (DRYIALARAMRCSLFRTKHHAR) are Cytoplasmic-facing. A helical membrane pass occupies residues 176–194 (LSCGLIWMASVSATLVPFT). The Extracellular segment spans residues 195 to 220 (AVHLQHTDEACFCFADVREVQWLEVT). The chain crosses the membrane as a helical span at residues 221 to 236 (LGFIVPFAIIGLCYSL). Residues 237–259 (IVRVLVRAHRHRGLRPRRQKALR) lie on the Cytoplasmic side of the membrane. Residues 260-280 (MILAVVLVFFVCWLPENVFIS) traverse the membrane as a helical segment. At 281 to 306 (VHLLQRTQPGAAPCKQSFRHAHPLTG) the chain is on the extracellular side. A helical transmembrane segment spans residues 307–327 (HIVNLAAFSNSCLNPLIYSFL). Topologically, residues 328 to 375 (GETFRDKLRLYIEQKTNLPALNRFCHAALKAVIPDSTEQSDVRFSSAV) are cytoplasmic.

The protein belongs to the G-protein coupled receptor 1 family. In terms of assembly, homodimer. Heterodimer; heterodimerizes with other G-protein-coupled receptor (GPCRs) like CRHR1, HTR1A and PAQR8. Interacts (via C-terminus tail motif) with DLG4 (via N-terminus tandem pair of PDZ domains); the interaction is direct and induces the increase of GPER1 protein levels residing at the plasma membrane surface in a estradiol-independent manner. Interacts with RAMP3; the interaction confers proper subcellular localization and function in cardioprotection. Interacts with KRT7 and KRT8. Interacts with EGFR; the interaction increases after agonist-induced stimulation in cancer-associated fibroblasts (CAF). Interacts with EGFR and ESR1. In terms of processing, ubiquitinated; ubiquitination occurs at the plasma membrane and leads to proteasome-mediated degradation. Glycosylated. Expressed in placenta, endothelial and epithelial cells, non laboring and laboring term myometrium, fibroblasts and cancer-associated fibroblasts (CAF), prostate cancer cells and invasive adenocarcinoma (at protein level). Ubiquitously expressed, but is most abundant in placenta. In brain regions, expressed as a 2.8 kb transcript in basal forebrain, frontal cortex, thalamus, hippocampus, caudate and putamen.

The protein resides in the nucleus. It localises to the cytoplasm. Its subcellular location is the perinuclear region. It is found in the cytoskeleton. The protein localises to the cell membrane. The protein resides in the basolateral cell membrane. It localises to the cytoplasmic vesicle membrane. Its subcellular location is the early endosome. It is found in the recycling endosome. The protein localises to the golgi apparatus membrane. The protein resides in the golgi apparatus. It localises to the trans-Golgi network. Its subcellular location is the endoplasmic reticulum membrane. It is found in the cell projection. The protein localises to the dendrite. The protein resides in the dendritic spine membrane. It localises to the axon. Its subcellular location is the postsynaptic density. It is found in the mitochondrion membrane. In terms of biological role, G-protein coupled estrogen receptor that binds to 17-beta-estradiol (E2) with high affinity, leading to rapid and transient activation of numerous intracellular signaling pathways. Stimulates cAMP production, calcium mobilization and tyrosine kinase Src inducing the release of heparin-bound epidermal growth factor (HB-EGF) and subsequent transactivation of the epidermal growth factor receptor (EGFR), activating downstream signaling pathways such as PI3K/Akt and ERK/MAPK. Mediates pleiotropic functions among others in the cardiovascular, endocrine, reproductive, immune and central nervous systems. Has a role in cardioprotection by reducing cardiac hypertrophy and perivascular fibrosis in a RAMP3-dependent manner. Regulates arterial blood pressure by stimulating vasodilation and reducing vascular smooth muscle and microvascular endothelial cell proliferation. Plays a role in blood glucose homeostasis contributing to the insulin secretion response by pancreatic beta cells. Triggers mitochondrial apoptosis during pachytene spermatocyte differentiation. Stimulates uterine epithelial cell proliferation. Enhances uterine contractility in response to oxytocin. Contributes to thymic atrophy by inducing apoptosis. Attenuates TNF-mediated endothelial expression of leukocyte adhesion molecules. Promotes neuritogenesis in developing hippocampal neurons. Plays a role in acute neuroprotection against NMDA-induced excitotoxic neuronal death. Increases firing activity and intracellular calcium oscillations in luteinizing hormone-releasing hormone (LHRH) neurons. Inhibits early osteoblast proliferation at growth plate during skeletal development. Inhibits mature adipocyte differentiation and lipid accumulation. Involved in the recruitment of beta-arrestin 2 ARRB2 at the plasma membrane in epithelial cells. Also functions as a receptor for aldosterone mediating rapid regulation of vascular contractibility through the PI3K/ERK signaling pathway. Involved in cancer progression regulation. Stimulates cancer-associated fibroblast (CAF) proliferation by a rapid genomic response through the EGFR/ERK transduction pathway. Associated with EGFR, may act as a transcription factor activating growth regulatory genes (c-fos, cyclin D1). Promotes integrin alpha-5/beta-1 and fibronectin (FN) matrix assembly in breast cancer cells. The polypeptide is G-protein coupled estrogen receptor 1 (Homo sapiens (Human)).